We begin with the raw amino-acid sequence, 115 residues long: U3-lycotoxin-Ls1l (115 aa).

The signal sequence occupies residues 1 to 20 (MKFVLLFGVLLVTLFSYSSA). Positions 21 to 44 (EMLDDFDQADEDELLSLIEKEEAR) are excised as a propeptide. Intrachain disulfides connect Cys55–Cys72, Cys62–Cys87, and Cys74–Cys85.

This sequence belongs to the neurotoxin 19 (CSTX) family. 01 subfamily. As to expression, expressed by the venom gland.

Its subcellular location is the secreted. This is U3-lycotoxin-Ls1l from Lycosa singoriensis (Wolf spider).